Reading from the N-terminus, the 752-residue chain is Double zinc ribbon and ankyrin repeat-containing protein 1 (752 aa).

2 consecutive DZANK-type zinc fingers follow at residues 210-270 (CPKC…VVCE) and 338-386 (CSKC…GGCG). Over residues 448 to 469 (KKRSQQREAELSRQEQMRDRKP) the composition is skewed to basic and acidic residues. 2 disordered regions span residues 448 to 471 (KKRS…KPLL) and 536 to 614 (PPEE…VGPE). Positions 536–554 (PPEESRSSSAGQRSRSVTS) are enriched in low complexity. Positions 555–580 (ESQNLSSVTEGRNSASPENNINTTGS) are enriched in polar residues. A compositionally biased stretch (basic and acidic residues) spans 600-614 (PESKDSLLLKEVGPE). ANK repeat units follow at residues 638-667 (DGRP…DVNQ), 672-703 (LKNT…SIRK), and 707-737 (RGQT…GLLL).

The protein localises to the cytoplasm. Its subcellular location is the cytoskeleton. The protein resides in the microtubule organizing center. It localises to the centrosome. It is found in the cilium basal body. Its function is as follows. Required for the intracellular transport of organelles and vesicles, and is essential for the photoreceptor's outer segments formation, maintenance and function. This Danio rerio (Zebrafish) protein is Double zinc ribbon and ankyrin repeat-containing protein 1 (dzank1).